The chain runs to 127 residues: Aspartate 1-decarboxylase (127 aa).

Residue Ser25 is the Schiff-base intermediate with substrate; via pyruvic acid of the active site. Ser25 is subject to Pyruvic acid (Ser). A substrate-binding site is contributed by Thr57. Tyr58 serves as the catalytic Proton donor. Position 73–75 (73–75 (GAA)) interacts with substrate.

Belongs to the PanD family. Heterooctamer of four alpha and four beta subunits. Requires pyruvate as cofactor. Is synthesized initially as an inactive proenzyme, which is activated by self-cleavage at a specific serine bond to produce a beta-subunit with a hydroxyl group at its C-terminus and an alpha-subunit with a pyruvoyl group at its N-terminus.

The protein resides in the cytoplasm. The enzyme catalyses L-aspartate + H(+) = beta-alanine + CO2. Its pathway is cofactor biosynthesis; (R)-pantothenate biosynthesis; beta-alanine from L-aspartate: step 1/1. Catalyzes the pyruvoyl-dependent decarboxylation of aspartate to produce beta-alanine. This Staphylococcus aureus (strain MSSA476) protein is Aspartate 1-decarboxylase.